The following is a 187-amino-acid chain: Elongation factor P (187 aa).

Belongs to the elongation factor P family.

It localises to the cytoplasm. It functions in the pathway protein biosynthesis; polypeptide chain elongation. In terms of biological role, involved in peptide bond synthesis. Stimulates efficient translation and peptide-bond synthesis on native or reconstituted 70S ribosomes in vitro. Probably functions indirectly by altering the affinity of the ribosome for aminoacyl-tRNA, thus increasing their reactivity as acceptors for peptidyl transferase. The polypeptide is Elongation factor P (Granulibacter bethesdensis (strain ATCC BAA-1260 / CGDNIH1)).